The primary structure comprises 454 residues: PC-esterase domain-containing protein 1A (454 aa).

This sequence belongs to the PC-esterase family.

The sequence is that of PC-esterase domain-containing protein 1A (PCED1A) from Homo sapiens (Human).